Reading from the N-terminus, the 291-residue chain is Pyridoxal 5'-phosphate synthase subunit PdxS (291 aa).

Asp23 is a D-ribose 5-phosphate binding site. Residue Lys80 is the Schiff-base intermediate with D-ribose 5-phosphate of the active site. Residue Gly152 participates in D-ribose 5-phosphate binding. D-glyceraldehyde 3-phosphate is bound at residue Arg164. D-ribose 5-phosphate contacts are provided by residues Gly213 and 234–235 (GS).

Belongs to the PdxS/SNZ family. In the presence of PdxT, forms a dodecamer of heterodimers.

It catalyses the reaction aldehydo-D-ribose 5-phosphate + D-glyceraldehyde 3-phosphate + L-glutamine = pyridoxal 5'-phosphate + L-glutamate + phosphate + 3 H2O + H(+). It participates in cofactor biosynthesis; pyridoxal 5'-phosphate biosynthesis. Catalyzes the formation of pyridoxal 5'-phosphate from ribose 5-phosphate (RBP), glyceraldehyde 3-phosphate (G3P) and ammonia. The ammonia is provided by the PdxT subunit. Can also use ribulose 5-phosphate and dihydroxyacetone phosphate as substrates, resulting from enzyme-catalyzed isomerization of RBP and G3P, respectively. The protein is Pyridoxal 5'-phosphate synthase subunit PdxS of Desulfitobacterium hafniense (strain DSM 10664 / DCB-2).